The following is a 1619-amino-acid chain: Rap-GAP domain-containing protein DDB_G0281809 (1619 aa).

Disordered stretches follow at residues 128 to 249 (SMSN…TTPI), 289 to 316 (QQQQ…MPGS), 907 to 974 (SIGG…PYIN), and 1134 to 1153 (ISNN…TSNN). 2 stretches are compositionally biased toward low complexity: residues 130 to 204 (SNNN…SLSL) and 231 to 249 (QISA…TTPI). The stretch at 265–295 (FNEVVQQQQQQQQQQQQQQQQQQQQQQQQQS) forms a coiled coil. 2 stretches are compositionally biased toward low complexity: residues 916–926 (SGNSSQPSSTG) and 934–965 (SGSK…NGGS). The Rap-GAP domain occupies 1273–1494 (LNMLDSVSER…TNRKKLISDI (222 aa)). Residues 1554–1619 (IGTFTLPPPP…LSQSEDQSHK (66 aa)) are disordered. The span at 1559–1573 (LPPPPISPTISPQPS) shows a compositional bias: pro residues. Residues 1574 to 1590 (PHLSSSGGSWASSKGGS) show a composition bias toward low complexity. A compositionally biased stretch (polar residues) spans 1591 to 1619 (TQPTTPSGRTSNFLSRRPNLSQSEDQSHK).

The sequence is that of Rap-GAP domain-containing protein DDB_G0281809 from Dictyostelium discoideum (Social amoeba).